Here is a 306-residue protein sequence, read N- to C-terminus: Putative HTH-type transcriptional regulatory protein Mhun_2548 (306 aa).

An HTH cro/C1-type domain is found at Leu132–Ile189. A DNA-binding region (H-T-H motif) is located at residues Leu143 to Ala162.

This is Putative HTH-type transcriptional regulatory protein Mhun_2548 from Methanospirillum hungatei JF-1 (strain ATCC 27890 / DSM 864 / NBRC 100397 / JF-1).